A 201-amino-acid polypeptide reads, in one-letter code: Retinol-binding protein 4 (201 aa).

Positions 1-18 are cleaved as a signal peptide; that stretch reads MEWVWALVLLAALGSGRG. 3 disulfides stabilise this stretch: cysteine 22–cysteine 178, cysteine 88–cysteine 192, and cysteine 138–cysteine 147. Glutamine 116 lines the substrate pocket. Residue arginine 139 is modified to Omega-N-methylarginine.

Belongs to the calycin superfamily. Lipocalin family. In terms of assembly, interacts with TTR. Interaction with TTR prevents its loss by filtration through the kidney glomeruli. Interacts with STRA6.

It localises to the secreted. Functionally, retinol-binding protein that mediates retinol transport in blood plasma. Delivers retinol from the liver stores to the peripheral tissues. Transfers the bound all-trans retinol to STRA6, that then facilitates retinol transport across the cell membrane. The chain is Retinol-binding protein 4 (RBP4) from Oryctolagus cuniculus (Rabbit).